A 491-amino-acid polypeptide reads, in one-letter code: Carbohydrate ABC transporter substrate-binding protein (491 aa).

The Zn(2+) site is built by aspartate 212, histidine 247, histidine 252, and glutamate 256.

It belongs to the bacterial solute-binding protein 1 family. In terms of assembly, exists as a monomer, homodimer, homotrimer and homotetramer; oligomerization increases with higher protein concentration.

Its subcellular location is the cell surface. Probably part of an ABC transporter complex involved in carbohydrate transport. The protein is Carbohydrate ABC transporter substrate-binding protein of Streptococcus pneumoniae serotype 4 (strain ATCC BAA-334 / TIGR4).